Reading from the N-terminus, the 497-residue chain is Glycerol kinase 2 (497 aa).

An ADP-binding site is contributed by Thr13. ATP is bound by residues Thr13, Thr14, and Ser15. Residue Thr13 coordinates sn-glycerol 3-phosphate. Residue Arg17 participates in ADP binding. Positions 83, 84, 134, and 241 each coordinate sn-glycerol 3-phosphate. Glycerol contacts are provided by Arg83, Glu84, Tyr134, Asp241, and Gln242. Residues Thr263 and Gly305 each coordinate ADP. The ATP site is built by Thr263, Gly305, Gln309, and Gly406. ADP contacts are provided by Gly406 and Asn410.

Belongs to the FGGY kinase family.

The enzyme catalyses glycerol + ATP = sn-glycerol 3-phosphate + ADP + H(+). Its pathway is polyol metabolism; glycerol degradation via glycerol kinase pathway; sn-glycerol 3-phosphate from glycerol: step 1/1. Its function is as follows. Key enzyme in the regulation of glycerol uptake and metabolism. Catalyzes the phosphorylation of glycerol to yield sn-glycerol 3-phosphate. This chain is Glycerol kinase 2, found in Sulfolobus acidocaldarius (strain ATCC 33909 / DSM 639 / JCM 8929 / NBRC 15157 / NCIMB 11770).